Consider the following 747-residue polypeptide: Asparagine synthetase [glutamine-hydrolyzing] 2 (747 aa).

Cysteine 2 acts as the For GATase activity in catalysis. The Glutamine amidotransferase type-2 domain maps to 2-218 (CGLAGIINLA…AGHYLEINLT (217 aa)). Residues 52–56 (RLSIL), 77–79 (NGE), and aspartate 100 contribute to the L-glutamine site. 395 to 396 (SP) lines the ATP pocket.

Belongs to the asparagine synthetase family.

The catalysed reaction is L-aspartate + L-glutamine + ATP + H2O = L-asparagine + L-glutamate + AMP + diphosphate + H(+). It functions in the pathway amino-acid biosynthesis; L-asparagine biosynthesis; L-asparagine from L-aspartate (L-Gln route): step 1/1. The polypeptide is Asparagine synthetase [glutamine-hydrolyzing] 2 (asnH) (Bacillus subtilis (strain 168)).